A 351-amino-acid chain; its full sequence is Ion-translocating oxidoreductase complex subunit D (351 aa).

4 consecutive transmembrane segments (helical) span residues 18 to 38 (IMLL…YFFG), 40 to 60 (GSLI…GAVL), 87 to 107 (LPPL…IVIA), and 121 to 141 (PAMV…TSWL). The residue at position 185 (T185) is an FMN phosphoryl threonine. Transmembrane regions (helical) follow at residues 211 to 231 (VLAG…GLLL), 241 to 261 (IPVS…MIAP), 264 to 284 (FASP…FFIA), 298 to 318 (LIFG…GGYP), and 320 to 340 (GVAF…HYTQ).

Belongs to the NqrB/RnfD family. As to quaternary structure, the complex is composed of six subunits: RnfA, RnfB, RnfC, RnfD, RnfE and RnfG. FMN is required as a cofactor.

Its subcellular location is the cell inner membrane. In terms of biological role, part of a membrane-bound complex that couples electron transfer with translocation of ions across the membrane. The chain is Ion-translocating oxidoreductase complex subunit D from Yersinia pseudotuberculosis serotype I (strain IP32953).